Reading from the N-terminus, the 395-residue chain is Envelope glycoprotein D (395 aa).

The N-terminal stretch at 1–17 is a signal peptide; sequence MGSGIAAVLLSLAVALA. Residues 18-342 lie on the Virion surface side of the membrane; sequence RVPAGEGEYV…PAPAPSGHTG (325 aa). Position 63 (His-63) interacts with Zn(2+). Cystine bridges form between Cys-90–Cys-214, Cys-131–Cys-227, and Cys-143–Cys-152. A glycan (N-linked (GlcNAc...) asparagine; by host) is linked at Asn-119. Asp-240 contacts Zn(2+). Residues 261–306 form a profusion region; that stretch reads LQAAGWHGPKAPFTSTLLPPEVVETANVTRPELAPEERGTSRTPGD. Asn-287 carries an N-linked (GlcNAc...) asparagine; by host glycan. Residues 289–314 form a disordered region; it reads TRPELAPEERGTSRTPGDEPAPAVAA. A helical membrane pass occupies residues 343 to 362; sequence AVVGALAGAGLAAGVVVLAV. Residues 363–395 lie on the Intravirion side of the membrane; it reads YLVRRRGRAAGKHVRLPELLEEAHGPARRGAPY.

Belongs to the herpesviridae glycoprotein D family.

The protein localises to the virion membrane. Its function is as follows. Envelope glycoprotein that binds to host cell entry receptors, promoting the virus entry into host cells. May trigger fusion with host membrane, by recruiting the fusion machinery composed of gB and gH/gL. The sequence is that of Envelope glycoprotein D (gD) from Cercopithecine herpesvirus 1 (CeHV-1).